The chain runs to 302 residues: Deoxyhypusine hydroxylase (302 aa).

Met1 bears the N-acetylmethionine mark. 5 HEAT-like PBS-type repeats span residues 54–80 (LKHE…VLQD), 87–113 (VRHE…YSSD), 174–200 (ERYR…GLHC), 205–231 (FRHE…ALAR), and 238–264 (VRHE…HADD). Residues His56, His89, and Glu90 each coordinate Fe cation. Positions 207, 240, and 241 each coordinate Fe cation.

The protein belongs to the deoxyhypusine hydroxylase family. It depends on Fe(2+) as a cofactor.

It carries out the reaction [eIF5A protein]-deoxyhypusine + AH2 + O2 = [eIF5A protein]-hypusine + A + H2O. It participates in protein modification; eIF5A hypusination. Catalyzes the hydroxylation of the N(6)-(4-aminobutyl)-L-lysine intermediate produced by deoxyhypusine synthase/DHPS on a critical lysine of the eukaryotic translation initiation factor 5A/eIF-5A. This is the second step of the post-translational modification of that lysine into an unusual amino acid residue named hypusine. Hypusination is unique to mature eIF-5A factor and is essential for its function. The protein is Deoxyhypusine hydroxylase of Homo sapiens (Human).